Here is a 72-residue protein sequence, read N- to C-terminus: uncharacterized protein (72 aa).

A helical membrane pass occupies residues 41–58; that stretch reads FSFLVHIMCGLTLTSYVI.

It localises to the membrane. This is an uncharacterized protein from Dictyostelium discoideum (Social amoeba).